The sequence spans 349 residues: MTPYSLLRPLIFRIPAEPAHRLTIKALGLAQGGTTLAPTPSLAQRIAGLAFPNPVGMAPGFDKNAEVPDAMLGLGFGFVEVGTVTPRPQEGNPKPRLFRLVEDRAVINRMGFNNEGAQAVTNRLVRRRETGKHGLPGIVGVNIGANKDSADRIADYALMTRLMAPLASYLTVNISSPNTPGLRALQDEGALAALLDAVIEARGNMTTPVFLKLAPDLEPADIDSICRIAIEKQLAALIISNTTITRPVLRSAHAGEAGGLSGAPLRELALQRLRDFRKASGGAIPLVGVGGIATVDDAWERIRAGASLIQIYSAMVYEGPGLARRLVAGLERKVREAGLTSIAEAVGSE.

FMN-binding positions include 59–63 and T83; that span reads PGFDK. K63 contacts substrate. Substrate is bound at residue 108–112; it reads NRMGF. FMN contacts are provided by N142 and N173. N173 lines the substrate pocket. S176 functions as the Nucleophile in the catalytic mechanism. N178 is a substrate binding site. Residues K212 and S240 each contribute to the FMN site. Position 241 to 242 (241 to 242) interacts with substrate; it reads NT. Residues G262, G291, and 312–313 each bind FMN; that span reads YS.

This sequence belongs to the dihydroorotate dehydrogenase family. Type 2 subfamily. In terms of assembly, monomer. FMN serves as cofactor.

The protein resides in the cell membrane. The catalysed reaction is (S)-dihydroorotate + a quinone = orotate + a quinol. It participates in pyrimidine metabolism; UMP biosynthesis via de novo pathway; orotate from (S)-dihydroorotate (quinone route): step 1/1. Functionally, catalyzes the conversion of dihydroorotate to orotate with quinone as electron acceptor. This is Dihydroorotate dehydrogenase (quinone) from Novosphingobium aromaticivorans (strain ATCC 700278 / DSM 12444 / CCUG 56034 / CIP 105152 / NBRC 16084 / F199).